A 307-amino-acid chain; its full sequence is Ornithine carbamoyltransferase (307 aa).

Carbamoyl phosphate is bound by residues 56 to 59 (STRT), glutamine 83, arginine 107, and 134 to 137 (HPCQ). Residues asparagine 165, aspartate 223, and 227–228 (SM) each bind L-ornithine. Residues 263 to 264 (CL) and arginine 291 each bind carbamoyl phosphate.

The protein belongs to the aspartate/ornithine carbamoyltransferase superfamily. OTCase family.

It is found in the cytoplasm. It carries out the reaction carbamoyl phosphate + L-ornithine = L-citrulline + phosphate + H(+). The protein operates within amino-acid biosynthesis; L-arginine biosynthesis; L-arginine from L-ornithine and carbamoyl phosphate: step 1/3. Its function is as follows. Reversibly catalyzes the transfer of the carbamoyl group from carbamoyl phosphate (CP) to the N(epsilon) atom of ornithine (ORN) to produce L-citrulline. In Cupriavidus pinatubonensis (strain JMP 134 / LMG 1197) (Cupriavidus necator (strain JMP 134)), this protein is Ornithine carbamoyltransferase.